Consider the following 402-residue polypeptide: Olfactomedin-like protein 1 (402 aa).

The N-terminal stretch at 1-28 is a signal peptide; it reads MMVALPGASASLVLFLAAFLPPLQHAQD. Residue Asn66 is glycosylated (N-linked (GlcNAc...) asparagine). Residues 73–135 adopt a coiled-coil conformation; it reads RCQTHTNEYR…EAEEEKKIRT (63 aa). Residues Asn138 and Asn183 are each glycosylated (N-linked (GlcNAc...) asparagine). The 258-residue stretch at 140–397 folds into the Olfactomedin-like domain; the sequence is SCDNMLMAIK…QIIYKLQTKK (258 aa). An intrachain disulfide couples Cys141 to Cys324.

In terms of processing, highly N-glycosylated.

Its subcellular location is the secreted. The protein is Olfactomedin-like protein 1 (Olfml1) of Rattus norvegicus (Rat).